Consider the following 298-residue polypeptide: NAD kinase (298 aa).

The active-site Proton acceptor is the Asp80. Residues 80–81 (DG), 154–155 (ND), Arg182, Asp184, 195–200 (TAYALS), Ala219, and Gln253 each bind NAD(+).

It belongs to the NAD kinase family. It depends on a divalent metal cation as a cofactor.

Its subcellular location is the cytoplasm. The enzyme catalyses NAD(+) + ATP = ADP + NADP(+) + H(+). Involved in the regulation of the intracellular balance of NAD and NADP, and is a key enzyme in the biosynthesis of NADP. Catalyzes specifically the phosphorylation on 2'-hydroxyl of the adenosine moiety of NAD to yield NADP. The protein is NAD kinase of Acidovorax sp. (strain JS42).